We begin with the raw amino-acid sequence, 692 residues long: Pentatricopeptide repeat-containing protein At2g04860 (692 aa).

PPR repeat units follow at residues 12–46 (DLSY…SLTP), 47–83 (NHFT…GLDR), 84–114 (FVYV…MPER), 115–149 (DTVV…GFSP), 150–184 (SATT…GLEL), 185–215 (DSQV…MKDK), 216–250 (STVS…NVEI), 280–314 (DISV…SIVG), 316–345 (TSIV…CMKI), 346–380 (DAVA…GLCT), 381–411 (KTLV…LQET), 412–447 (PLIS…GLLP), 448–482 (DAIT…NFEN), 483–513 (ENFV…IKAP), 514–548 (CTAT…GLKP), 549–584 (DEIT…GISP), and 585–615 (TLQH…MDIK). The segment at 620–692 (VWGALLSACI…YDGYLGVSQI (73 aa)) is type E motif; degenerate.

The protein belongs to the PPR family. PCMP-E subfamily.

The protein is Pentatricopeptide repeat-containing protein At2g04860 (PCMP-E74) of Arabidopsis thaliana (Mouse-ear cress).